The following is a 399-amino-acid chain: Exodeoxyribonuclease 7 large subunit (399 aa).

Belongs to the XseA family. As to quaternary structure, heterooligomer composed of large and small subunits.

It localises to the cytoplasm. The catalysed reaction is Exonucleolytic cleavage in either 5'- to 3'- or 3'- to 5'-direction to yield nucleoside 5'-phosphates.. Its function is as follows. Bidirectionally degrades single-stranded DNA into large acid-insoluble oligonucleotides, which are then degraded further into small acid-soluble oligonucleotides. This Clostridium botulinum (strain Eklund 17B / Type B) protein is Exodeoxyribonuclease 7 large subunit.